A 62-amino-acid chain; its full sequence is Large ribosomal subunit protein bL32m (62 aa).

This sequence belongs to the bacterial ribosomal protein bL32 family.

It is found in the mitochondrion. The chain is Large ribosomal subunit protein bL32m (RPL32) from Reclinomonas americana.